Reading from the N-terminus, the 92-residue chain is Putative pterin-4-alpha-carbinolamine dehydratase 2 (92 aa).

It belongs to the pterin-4-alpha-carbinolamine dehydratase family.

It carries out the reaction (4aS,6R)-4a-hydroxy-L-erythro-5,6,7,8-tetrahydrobiopterin = (6R)-L-erythro-6,7-dihydrobiopterin + H2O. In Gloeobacter violaceus (strain ATCC 29082 / PCC 7421), this protein is Putative pterin-4-alpha-carbinolamine dehydratase 2.